A 1140-amino-acid polypeptide reads, in one-letter code: TBC1 domain family member 8 (1140 aa).

GRAM domains lie at valine 145–serine 212 and glutamate 285–glutamate 353. The Rab-GAP TBC domain maps to glycine 505–glycine 692. A disordered region spans residues glycine 1031–serine 1070. Over residues glutamine 1032 to glutamate 1043 the composition is skewed to low complexity.

In terms of biological role, may act as a GTPase-activating protein for Rab family protein(s). In Homo sapiens (Human), this protein is TBC1 domain family member 8 (TBC1D8).